Consider the following 365-residue polypeptide: Myb/SANT-like DNA-binding domain-containing protein 3 (365 aa).

A Myb-like domain is found at 13–78; sequence FSELEKSVLL…QLKKCWENIK (66 aa). Positions 301–337 form a coiled coil; sequence QLIQMNEVHVAKVQQIERECEMAEEEHRIKMEILNKK.

The protein belongs to the MSANTD3 family.

The chain is Myb/SANT-like DNA-binding domain-containing protein 3 (msantd3) from Xenopus laevis (African clawed frog).